The following is a 365-amino-acid chain: BTB/POZ and TAZ domain-containing protein 1 (365 aa).

Positions 25–96 (TDVEIITSGR…LYSPSVTENE (72 aa)) constitute a BTB domain. The Nuclear localization signal signature appears at 193-202 (RKKRRRRHRR). The TAZ-type zinc finger occupies 205 to 304 (NLYLQLSEAM…SESCRVPLCR (100 aa)). Residues 315–338 (KMVEDTKWKVLVRRVASAKAMSSL) form a caM-binding region.

As to quaternary structure, interacts with CUL3A. Interacts with GTE9/BET9 and GTE11/BET10 through the BTB domain. Preferentially expressed in young leaves, roots and stems.

The protein resides in the nucleus. The protein localises to the cytoplasm. Its pathway is protein modification; protein ubiquitination. In terms of biological role, may act as a substrate-specific adapter of an E3 ubiquitin-protein ligase complex (CUL3-RBX1-BTB) which mediates the ubiquitination and subsequent proteasomal degradation of target proteins. Also targeted for degradation by the 26S proteasome pathway. May be involved in gametophyte development. The polypeptide is BTB/POZ and TAZ domain-containing protein 1 (BT1) (Arabidopsis thaliana (Mouse-ear cress)).